We begin with the raw amino-acid sequence, 100 residues long: NADH-quinone oxidoreductase subunit K (100 aa).

3 consecutive transmembrane segments (helical) span residues 4-24, 28-48, and 60-80; these read LFHG…SLIV, ILFI…ALIV, and IMYI…LALL.

It belongs to the complex I subunit 4L family. NDH-1 is composed of 13 different subunits. Subunits NuoA, H, J, K, L, M, N constitute the membrane sector of the complex.

It is found in the cell membrane. The catalysed reaction is a quinone + NADH + 5 H(+)(in) = a quinol + NAD(+) + 4 H(+)(out). In terms of biological role, NDH-1 shuttles electrons from NADH, via FMN and iron-sulfur (Fe-S) centers, to quinones in the respiratory chain. The immediate electron acceptor for the enzyme in this species is believed to be ubiquinone. Couples the redox reaction to proton translocation (for every two electrons transferred, four hydrogen ions are translocated across the cytoplasmic membrane), and thus conserves the redox energy in a proton gradient. The sequence is that of NADH-quinone oxidoreductase subunit K from Buchnera aphidicola subsp. Acyrthosiphon pisum (strain 5A).